Here is a 32-residue protein sequence, read N- to C-terminus: MLTITSYVGLLFTALGFTLGLYFGLTKVVKLI.

A helical transmembrane segment spans residues 4-26; sequence ITSYVGLLFTALGFTLGLYFGLT.

This sequence belongs to the PetL family. In terms of assembly, the 4 large subunits of the cytochrome b6-f complex are cytochrome b6, subunit IV (17 kDa polypeptide, PetD), cytochrome f and the Rieske protein, while the 4 small subunits are PetG, PetL, PetM and PetN. The complex functions as a dimer.

The protein localises to the plastid. Its subcellular location is the chloroplast thylakoid membrane. Its function is as follows. Component of the cytochrome b6-f complex, which mediates electron transfer between photosystem II (PSII) and photosystem I (PSI), cyclic electron flow around PSI, and state transitions. PetL is important for photoautotrophic growth as well as for electron transfer efficiency and stability of the cytochrome b6-f complex. The sequence is that of Cytochrome b6-f complex subunit 6 from Tetradesmus obliquus (Green alga).